Consider the following 371-residue polypeptide: Cytochrome b (371 aa).

4 helical membrane-spanning segments follow: residues F25–V45, W69–I90, W105–L125, and F170–M190. Heme b-binding residues include H75 and H89. Residues H174 and H188 each coordinate heme b. An a ubiquinone-binding site is contributed by H193. 4 helical membrane-spanning segments follow: residues Y218–L238, L280–H300, I312–T332, and F339–P358.

This sequence belongs to the cytochrome b family. The cytochrome bc1 complex contains 3 respiratory subunits (MT-CYB, CYC1 and UQCRFS1), 2 core proteins (UQCRC1 and UQCRC2) and probably 6 low-molecular weight proteins. Heme b is required as a cofactor.

It is found in the mitochondrion inner membrane. Its function is as follows. Component of the ubiquinol-cytochrome c reductase complex (complex III or cytochrome b-c1 complex) that is part of the mitochondrial respiratory chain. The b-c1 complex mediates electron transfer from ubiquinol to cytochrome c. Contributes to the generation of a proton gradient across the mitochondrial membrane that is then used for ATP synthesis. The polypeptide is Cytochrome b (MT-CYB) (Eryx miliaris (Desert sand boa)).